Consider the following 248-residue polypeptide: 5'-nucleotidase SurE (248 aa).

4 residues coordinate a divalent metal cation: D8, D9, S39, and N91.

This sequence belongs to the SurE nucleotidase family. A divalent metal cation serves as cofactor.

Its subcellular location is the cytoplasm. The catalysed reaction is a ribonucleoside 5'-phosphate + H2O = a ribonucleoside + phosphate. In terms of biological role, nucleotidase that shows phosphatase activity on nucleoside 5'-monophosphates. This is 5'-nucleotidase SurE from Pseudoalteromonas atlantica (strain T6c / ATCC BAA-1087).